The sequence spans 542 residues: CTP synthase (542 aa).

Residues 1-269 (MQTKYIFITG…DALICELLHL (269 aa)) form an amidoligase domain region. Serine 14 is a CTP binding site. Serine 14 provides a ligand contact to UTP. ATP is bound by residues 15–20 (SLGKGL) and aspartate 72. Residues aspartate 72 and glutamate 143 each contribute to the Mg(2+) site. Residues 150–152 (DIE), 189–194 (KTKPSQ), and lysine 225 contribute to the CTP site. Residues 189–194 (KTKPSQ) and lysine 225 contribute to the UTP site. Residue 241-243 (KDV) coordinates ATP. One can recognise a Glutamine amidotransferase type-1 domain in the interval 301–538 (YVQHQDAYKS…IQAMIIYHKS (238 aa)). Glycine 358 lines the L-glutamine pocket. Catalysis depends on cysteine 385, which acts as the Nucleophile; for glutamine hydrolysis. L-glutamine-binding positions include 386–389 (LGMQ), glutamate 409, and arginine 466. Catalysis depends on residues histidine 511 and glutamate 513.

It belongs to the CTP synthase family. As to quaternary structure, homotetramer.

It carries out the reaction UTP + L-glutamine + ATP + H2O = CTP + L-glutamate + ADP + phosphate + 2 H(+). It catalyses the reaction L-glutamine + H2O = L-glutamate + NH4(+). The catalysed reaction is UTP + NH4(+) + ATP = CTP + ADP + phosphate + 2 H(+). It participates in pyrimidine metabolism; CTP biosynthesis via de novo pathway; CTP from UDP: step 2/2. Allosterically activated by GTP, when glutamine is the substrate; GTP has no effect on the reaction when ammonia is the substrate. The allosteric effector GTP functions by stabilizing the protein conformation that binds the tetrahedral intermediate(s) formed during glutamine hydrolysis. Inhibited by the product CTP, via allosteric rather than competitive inhibition. Its function is as follows. Catalyzes the ATP-dependent amination of UTP to CTP with either L-glutamine or ammonia as the source of nitrogen. Regulates intracellular CTP levels through interactions with the four ribonucleotide triphosphates. The protein is CTP synthase of Protochlamydia amoebophila (strain UWE25).